Reading from the N-terminus, the 122-residue chain is Holo-[acyl-carrier-protein] synthase (122 aa).

Mg(2+)-binding residues include D9 and E58.

It belongs to the P-Pant transferase superfamily. AcpS family. Mg(2+) is required as a cofactor.

Its subcellular location is the cytoplasm. The enzyme catalyses apo-[ACP] + CoA = holo-[ACP] + adenosine 3',5'-bisphosphate + H(+). Functionally, transfers the 4'-phosphopantetheine moiety from coenzyme A to a Ser of acyl-carrier-protein. The chain is Holo-[acyl-carrier-protein] synthase from Chlamydia pneumoniae (Chlamydophila pneumoniae).